A 785-amino-acid chain; its full sequence is Tripartite terminase subunit 1 (785 aa).

A C3H1-type zinc finger spans residues 197 to 225; the sequence is CAVCFEELCVTANQGATIARRLADRICNH. 2 disordered regions span residues 433-452 and 457-489; these read GGAA…GDRV and GARG…GDIA. 696–703 serves as a coordination point for ATP; the sequence is FASVYRCG.

Belongs to the herpesviridae TRM1 protein family. As to quaternary structure, associates with TRM2 and TRM3 to form the tripartite terminase complex. Interacts with portal protein.

It is found in the host nucleus. Functionally, component of the molecular motor that translocates viral genomic DNA in empty capsid during DNA packaging. Forms a tripartite terminase complex together with TRM2 and TRM3 in the host cytoplasm. Once the complex reaches the host nucleus, it interacts with the capsid portal vertex. This portal forms a ring in which genomic DNA is translocated into the capsid. TRM1 carries an endonuclease activity that plays an important role for the cleavage of concatemeric viral DNA into unit length genomes. The protein is Tripartite terminase subunit 1 of Human herpesvirus 1 (strain 17) (HHV-1).